A 471-amino-acid polypeptide reads, in one-letter code: MGKLHSKPAAVCKRRESPEGDSFAVSAAWARKGIEEWIGRQRCPGSVSGPRQLRLAGTVGRGTRELVGDTSREALGEEDEDDFPLEVALPPEKIDSLGSGDEKRMERLSEPGQASKKQLKFEELQCDVSVEEDSRQEWTFTLYDFDNNGKVTREDITSLLHTIYEVVDSSVNHSPTSSKTLRVKLTVAPDGSQSKRSVLFNHTDLQSTRPRADTKPAEELRGWEKKQRAPLRFQGDSHLEQPDCYHHCVDENIERRNHYLDLAGIENYTSQFGPGSPSVAQKSELPPRISNPTRSRSHEPEAAHIPHRRPQGVDPGSFHLLDTPFAKASELQQRLRGTQDGSKHFVRSPKAQGKNMGMGHGARGARSKPPLVPTTHTVSPSAHLATSPALLPTLAPLGHKKHKHRAKESQASCRGLQGPLAAGGSTVMGREQVRELPAVVVYESQAGQAVQRHEHHHHHEHHHHYHHFYQP.

Disordered stretches follow at residues 1–23 (MGKL…GDSF) and 41–82 (QRCP…DEDD). Residue glycine 2 is the site of N-myristoyl glycine attachment. The span at 62–75 (GTRELVGDTSREAL) shows a compositional bias: basic and acidic residues. Residues 125-190 (QCDVSVEEDS…LRVKLTVAPD (66 aa)) are interaction with DVL1, DVL2 and DVL3. In terms of domain architecture, EF-hand spans 131 to 166 (EEDSRQEWTFTLYDFDNNGKVTREDITSLLHTIYEV). Residues aspartate 144, aspartate 146, asparagine 148, lysine 150, and aspartate 155 each coordinate Ca(2+). 3 disordered regions span residues 273-314 (GPGS…QGVD), 337-382 (GTQD…SPSA), and 448-471 (QAVQ…FYQP). Basic residues predominate over residues 453–471 (HEHHHHHEHHHHYHHFYQP).

This sequence belongs to the NKD family. In terms of assembly, interacts with DVL1, DVL2, DVL3 and PPP2R3A. In terms of tissue distribution, highly expressed in lung. Also expressed in brain, heart, kidney, liver, skin, stomach and testis. Within the testis expression is found in the seminiferous epithelium and round and elongating spermatids.

It localises to the cell membrane. Its subcellular location is the cytoplasm. Cell autonomous antagonist of the canonical Wnt signaling pathway. May activate a second Wnt signaling pathway that controls planar cell polarity. Required for spermatogenesis. In Mus musculus (Mouse), this protein is Protein naked cuticle homolog 1 (Nkd1).